A 411-amino-acid polypeptide reads, in one-letter code: Growth-regulating factor 7 (411 aa).

One can recognise a QLQ domain in the interval 38-73 (PFTPTQWMELEHQALIYKHIVANAPVPAGLLLPIRR). The WRC domain maps to 108–152 (DSEPGRCRRTDGKKWRCSRDAVVDQKYCERHINRGRHRSRKHVEG). 2 short sequence motifs (bipartite nuclear localization signal) span residues 113–123 (RCRRTDGKKWR) and 141–148 (RGRHRSRK). Residues 333-369 (FFTNTSSASDDKGKSRHPPSLNLLADGHTTSPQLQSP) form a disordered region. A compositionally biased stretch (polar residues) spans 360–369 (HTTSPQLQSP).

The protein belongs to the GRF family.

It localises to the nucleus. Transcription activator that plays a regulatory role in gibberellin-induced stem elongation. This is Growth-regulating factor 7 (GRF7) from Oryza sativa subsp. japonica (Rice).